We begin with the raw amino-acid sequence, 89 residues long: Endoribonuclease VapD 1 (89 aa).

It belongs to the VapD ribonuclease family. In terms of assembly, homodimer.

In terms of biological role, cleaves ssRNA, mostly between U:A. In Riemerella anatipestifer (Moraxella anatipestifer), this protein is Endoribonuclease VapD 1.